The following is a 277-amino-acid chain: Large ribosomal subunit protein uL2 (277 aa).

The segment at 218-277 is disordered; that stretch reads PTVRGSVMNPNDHPHGGGEGKAPVGRKAPSTPWGKPALGLKTRNKKAKSDKLIVRRRNEK. Residues 264 to 277 are compositionally biased toward basic and acidic residues; the sequence is AKSDKLIVRRRNEK.

Belongs to the universal ribosomal protein uL2 family. In terms of assembly, part of the 50S ribosomal subunit. Forms a bridge to the 30S subunit in the 70S ribosome.

In terms of biological role, one of the primary rRNA binding proteins. Required for association of the 30S and 50S subunits to form the 70S ribosome, for tRNA binding and peptide bond formation. It has been suggested to have peptidyltransferase activity; this is somewhat controversial. Makes several contacts with the 16S rRNA in the 70S ribosome. The chain is Large ribosomal subunit protein uL2 from Streptococcus pyogenes serotype M4 (strain MGAS10750).